Here is a 231-residue protein sequence, read N- to C-terminus: Secreted LysM effector LysM13 (231 aa).

The signal sequence occupies residues 1 to 19; that stretch reads MVFLSLKYALSGLAATAAA. N-linked (GlcNAc...) asparagine glycans are attached at residues Asn30, Asn34, Asn77, Asn100, Asn130, Asn201, and Asn226. Positions 38–82 constitute a LysM domain; sequence TTYTTTSEDTIFTVARKFDRGPCDIARYNRMIDAEHIFANFTLRI.

This sequence belongs to the secreted LysM effector family.

Its subcellular location is the secreted. In terms of biological role, secreted LysM effector that might have a role in sequestration of chitin oligosaccharides (breakdown products of fungal cell walls that are released during invasion and act as triggers of host immunity) to dampen host defense. The polypeptide is Secreted LysM effector LysM13 (Penicillium expansum (Blue mold rot fungus)).